Consider the following 564-residue polypeptide: Probable pectinesterase/pectinesterase inhibitor 46 (564 aa).

A helical membrane pass occupies residues 25–45 (IAIIAISSIVLVCIVVGAVVG). The segment at 62–207 (EPISVSVKAL…TEMTSNALAI (146 aa)) is pectinesterase inhibitor 46. N90, N126, N147, and N196 each carry an N-linked (GlcNAc...) asparagine glycan. The segment at 257-550 (TIVVAKDGSG…FTVKPFIDGN (294 aa)) is pectinesterase 46. Positions 332 and 362 each coordinate substrate. D385 acts as the Proton donor; for pectinesterase activity in catalysis. An intrachain disulfide couples C399 to C419. Residue D406 is the Nucleophile; for pectinesterase activity of the active site. N452 and N460 each carry an N-linked (GlcNAc...) asparagine glycan. Substrate is bound by residues R470 and W472.

In the N-terminal section; belongs to the PMEI family. This sequence in the C-terminal section; belongs to the pectinesterase family.

The protein resides in the membrane. It catalyses the reaction [(1-&gt;4)-alpha-D-galacturonosyl methyl ester](n) + n H2O = [(1-&gt;4)-alpha-D-galacturonosyl](n) + n methanol + n H(+). The protein operates within glycan metabolism; pectin degradation; 2-dehydro-3-deoxy-D-gluconate from pectin: step 1/5. Acts in the modification of cell walls via demethylesterification of cell wall pectin. This Arabidopsis thaliana (Mouse-ear cress) protein is Probable pectinesterase/pectinesterase inhibitor 46 (PME46).